The primary structure comprises 123 residues: Large ribosomal subunit protein bL12 (123 aa).

Belongs to the bacterial ribosomal protein bL12 family. As to quaternary structure, homodimer. Part of the ribosomal stalk of the 50S ribosomal subunit. Forms a multimeric L10(L12)X complex, where L10 forms an elongated spine to which 2 to 4 L12 dimers bind in a sequential fashion. Binds GTP-bound translation factors.

Forms part of the ribosomal stalk which helps the ribosome interact with GTP-bound translation factors. Is thus essential for accurate translation. In Mycoplasmopsis agalactiae (strain NCTC 10123 / CIP 59.7 / PG2) (Mycoplasma agalactiae), this protein is Large ribosomal subunit protein bL12.